The chain runs to 103 residues: Large ribosomal subunit protein bL21 (103 aa).

Belongs to the bacterial ribosomal protein bL21 family. In terms of assembly, part of the 50S ribosomal subunit. Contacts protein L20.

Functionally, this protein binds to 23S rRNA in the presence of protein L20. The protein is Large ribosomal subunit protein bL21 of Parvibaculum lavamentivorans (strain DS-1 / DSM 13023 / NCIMB 13966).